Here is a 662-residue protein sequence, read N- to C-terminus: Interferon-induced GTP-binding protein Mx1 (662 aa).

Methionine 1 carries the N-acetylmethionine; in Interferon-induced GTP-binding protein Mx1; alternate modification. The 274-residue stretch at 67–340 folds into the Dynamin-type G domain; the sequence is DLALPAIAVI…LITHICKSLP (274 aa). Positions 77 to 84 are G1 motif; that stretch reads GDQSSGKS. Residue 77–84 participates in GTP binding; the sequence is GDQSSGKS. Positions 102 to 104 are G2 motif; the sequence is VTR. The tract at residues 178–181 is G3 motif; that stretch reads DLPG. Residues 178–182 and 247–250 each bind GTP; these read DLPGI and TKPD. The segment at 247–250 is G4 motif; sequence TKPD. The interval 279 to 282 is G5 motif; sequence KCRG. Residues 341–366 are bundle signaling element (BSE); that stretch reads LLENQIKETHQRITEELQKYGVDIPE. A middle domain region spans residues 366–533; the sequence is EDENEKMFFL…HFQMEQIVYC (168 aa). Residues 367-632 form a stalk region; sequence DENEKMFFLI…KDTYSWLLKE (266 aa). The segment at 554-557 is critical for lipid-binding; sequence KKKK. A GED domain is found at 574–662; sequence MEEIFQHLMA…ARRRLAQFPG (89 aa).

This sequence belongs to the TRAFAC class dynamin-like GTPase superfamily. Dynamin/Fzo/YdjA family. In terms of assembly, homotetramer. Oligomerizes into multimeric filamentous or ring-like structures by virtue of its stalk domain. Oligomerization is critical for GTPase activity, protein stability, and recognition of viral target structures. Interacts with TRPC1, TRPC3, TRPC4, TRPC5, TRPC6 and TRPC7. Interacts with HSPA5. Interacts with DDX39A and DDX39B. Interacts with TUBB/TUBB5. The GTP-bound form interacts (via C-terminus) with THOV P5 protein. The GTP-bound form interacts with LACV protein N. Interacts with CCHFV protein N. ISGylated.

The protein localises to the cytoplasm. It localises to the endoplasmic reticulum membrane. It is found in the perinuclear region. Its subcellular location is the nucleus. Its function is as follows. Interferon-induced dynamin-like GTPase with antiviral activity against a wide range of RNA viruses and some DNA viruses. Its target viruses include negative-stranded RNA viruses and HBV through binding and inactivation of their ribonucleocapsid. May also antagonize reoviridae and asfarviridae replication. Inhibits thogoto virus (THOV) replication by preventing the nuclear import of viral nucleocapsids. Inhibits La Crosse virus (LACV) replication by sequestering viral nucleoprotein in perinuclear complexes, preventing genome amplification, budding, and egress. Inhibits influenza A virus (IAV) replication by decreasing or delaying NP synthesis and by blocking endocytic traffic of incoming virus particles. Enhances ER stress-mediated cell death after influenza virus infection. May regulate the calcium channel activity of TRPCs. This chain is Interferon-induced GTP-binding protein Mx1 (MX1), found in Homo sapiens (Human).